We begin with the raw amino-acid sequence, 274 residues long: Large ribosomal subunit protein uL2 (274 aa).

The segment at 223 to 256 (VVMNPVDHPHGGGEGKTGEGRHPVDPWGNLTKGY) is disordered. Positions 229-246 (DHPHGGGEGKTGEGRHPV) are enriched in basic and acidic residues.

It belongs to the universal ribosomal protein uL2 family. Part of the 50S ribosomal subunit. Forms a bridge to the 30S subunit in the 70S ribosome.

Its function is as follows. One of the primary rRNA binding proteins. Required for association of the 30S and 50S subunits to form the 70S ribosome, for tRNA binding and peptide bond formation. It has been suggested to have peptidyltransferase activity; this is somewhat controversial. Makes several contacts with the 16S rRNA in the 70S ribosome. In Albidiferax ferrireducens (strain ATCC BAA-621 / DSM 15236 / T118) (Rhodoferax ferrireducens), this protein is Large ribosomal subunit protein uL2.